Consider the following 512-residue polypeptide: Serine/threonine-protein kinase BSK1 (512 aa).

The N-myristoyl glycine moiety is linked to residue Gly-2. The segment at 8 to 48 (FSGDNPLGKDGVQPQPLSQNNHGGATTADNGGSGGASGVGG) is disordered. Gly residues predominate over residues 38–48 (GGSGGASGVGG). One can recognise a Protein kinase domain in the interval 76–331 (DNIVSESGEK…DLVATLAPLQ (256 aa)). Residues 82-90 (SGEKAPNLV) and Lys-104 contribute to the ATP site. The active-site Proton acceptor is the Asp-198. Ser-230 carries the phosphoserine modification. The stretch at 483-508 (AKLNMNTDAADMLNEAAQLEEKRQRG) forms a coiled coil.

Belongs to the protein kinase superfamily. Ser/Thr protein kinase family. Interacts with BRI1. Interacts with ASK7/BIN2, BSK5, BSK6, BSK8 and BSK11. Interacts with FLS2. Post-translationally, phosphorylated at Ser-230 by BRI1 upon brassinolide (BL) treatment. Phosphorylation at Ser-230 weakens the interaction between BSK1 and BRI1. Phosphorylated by ASK7/BIN2 and ASK9/BIL2.

Its subcellular location is the cell membrane. The enzyme catalyses L-seryl-[protein] + ATP = O-phospho-L-seryl-[protein] + ADP + H(+). It carries out the reaction L-threonyl-[protein] + ATP = O-phospho-L-threonyl-[protein] + ADP + H(+). In terms of biological role, serine/threonine kinase that acts as a positive regulator of brassinosteroid (BR) signaling downstream of the receptor kinase BRI1. Mediates signal transduction from BRI1 by functioning as substrate of BRI1. Functions as a positive regulator of plant immunity. May be involved in the regulation of pattern-triggered immunity (PTI) downstream of the flagellin receptor FLS2. Possesses kinase activity in vitro. Kinase activity is required for its function in innate immunity. This is Serine/threonine-protein kinase BSK1 from Arabidopsis thaliana (Mouse-ear cress).